A 596-amino-acid chain; its full sequence is Elongation factor 4 (596 aa).

The tr-type G domain maps to 2–184; the sequence is KHIRNFSIIA…VIVAKIPPPE (183 aa). GTP contacts are provided by residues 14–19 and 131–134; these read DHGKST and NKID.

Belongs to the TRAFAC class translation factor GTPase superfamily. Classic translation factor GTPase family. LepA subfamily.

It is found in the cell inner membrane. It carries out the reaction GTP + H2O = GDP + phosphate + H(+). Its function is as follows. Required for accurate and efficient protein synthesis under certain stress conditions. May act as a fidelity factor of the translation reaction, by catalyzing a one-codon backward translocation of tRNAs on improperly translocated ribosomes. Back-translocation proceeds from a post-translocation (POST) complex to a pre-translocation (PRE) complex, thus giving elongation factor G a second chance to translocate the tRNAs correctly. Binds to ribosomes in a GTP-dependent manner. The chain is Elongation factor 4 from Shewanella putrefaciens (strain CN-32 / ATCC BAA-453).